Reading from the N-terminus, the 176-residue chain is ATP-dependent protease subunit HslV (176 aa).

The active site involves Thr-2. Residues Gly-157, Cys-160, and Thr-163 each coordinate Na(+).

This sequence belongs to the peptidase T1B family. HslV subfamily. As to quaternary structure, a double ring-shaped homohexamer of HslV is capped on each side by a ring-shaped HslU homohexamer. The assembly of the HslU/HslV complex is dependent on binding of ATP.

Its subcellular location is the cytoplasm. The enzyme catalyses ATP-dependent cleavage of peptide bonds with broad specificity.. Allosterically activated by HslU binding. Protease subunit of a proteasome-like degradation complex believed to be a general protein degrading machinery. The chain is ATP-dependent protease subunit HslV from Photorhabdus laumondii subsp. laumondii (strain DSM 15139 / CIP 105565 / TT01) (Photorhabdus luminescens subsp. laumondii).